A 584-amino-acid chain; its full sequence is Putative adenine deaminase BA_3032/GBAA_3032/BAS2818 (584 aa).

This sequence belongs to the metallo-dependent hydrolases superfamily. Adenine deaminase family.

The catalysed reaction is adenine + H2O + H(+) = hypoxanthine + NH4(+). This is Putative adenine deaminase BA_3032/GBAA_3032/BAS2818 from Bacillus anthracis.